We begin with the raw amino-acid sequence, 687 residues long: Glycine--tRNA ligase beta subunit (687 aa).

It belongs to the class-II aminoacyl-tRNA synthetase family. As to quaternary structure, tetramer of two alpha and two beta subunits.

The protein localises to the cytoplasm. It carries out the reaction tRNA(Gly) + glycine + ATP = glycyl-tRNA(Gly) + AMP + diphosphate. The protein is Glycine--tRNA ligase beta subunit of Trichlorobacter lovleyi (strain ATCC BAA-1151 / DSM 17278 / SZ) (Geobacter lovleyi).